Consider the following 198-residue polypeptide: Putative NADH dehydrogenase/NAD(P)H nitroreductase XOO4267 (198 aa).

This sequence belongs to the nitroreductase family. HadB/RutE subfamily. FMN serves as cofactor.

The chain is Putative NADH dehydrogenase/NAD(P)H nitroreductase XOO4267 from Xanthomonas oryzae pv. oryzae (strain KACC10331 / KXO85).